The following is a 183-amino-acid chain: Orotate phosphoribosyltransferase (183 aa).

5-phospho-alpha-D-ribose 1-diphosphate contacts are provided by residues arginine 90, lysine 91, lysine 94, and 115–123 (DDVATTGGS). Orotate contacts are provided by threonine 119 and arginine 147.

The protein belongs to the purine/pyrimidine phosphoribosyltransferase family. PyrE subfamily. In terms of assembly, homodimer. Mg(2+) serves as cofactor.

It carries out the reaction orotidine 5'-phosphate + diphosphate = orotate + 5-phospho-alpha-D-ribose 1-diphosphate. The protein operates within pyrimidine metabolism; UMP biosynthesis via de novo pathway; UMP from orotate: step 1/2. In terms of biological role, catalyzes the transfer of a ribosyl phosphate group from 5-phosphoribose 1-diphosphate to orotate, leading to the formation of orotidine monophosphate (OMP). The chain is Orotate phosphoribosyltransferase from Methanopyrus kandleri (strain AV19 / DSM 6324 / JCM 9639 / NBRC 100938).